A 341-amino-acid chain; its full sequence is MTDGILGKAATMEIPIHGNGEAGQLPEDDGLEQDLQQVMVSGPNLNETSIVSGGYGGSGDGLIPTGSGRHPSHSTSPSGPGDEVARGIAGEKFDIVKKWGINTYKCTKQLLSERFGRGSRTVDLELELQIELLRETKRKYESVLQLGRALTAHLYSLLQTQHALGDAFADLSQKSPELQEEFGYNAETQKLLCKNGETLLGAVNFFVSSINTLVTKTMEDTLMTVKQYEAARLEYDAYRTDLEELSLGPRDAGTRGRLESAQATFQTHRDKYEKLRGDVAIKLKFLEENKIKVMHKQLLLFHNAVSAYFAGNQKQLEQTLQQFNIKLRPPGAEKPSWLEEQ.

The disordered stretch occupies residues 46-84 (NETSIVSGGYGGSGDGLIPTGSGRHPSHSTSPSGPGDEV). The segment covering 65–81 (TGSGRHPSHSTSPSGPG) has biased composition (low complexity). S72 bears the Phosphoserine mark. Residues 121-321 (TVDLELELQI…NQKQLEQTLQ (201 aa)) enclose the AH domain.

Forms homodimers or heterodimers with ARFIP1. Interacts with RAC1. Specifically binds to GTP-bound ARF1 and ARF6, but binds to RAC1.GTP and RAC1.GDP with similar affinities. Interacts with ARL1. Interacts (via N-terminus) with IKBKB and IKBKG; these interactions inhibit activation of NF-kappa-B.

Its subcellular location is the golgi apparatus. The protein localises to the trans-Golgi network membrane. Its function is as follows. Plays a role in constitutive metalloproteinase (MMP) secretion from the trans Golgi network. May have important functions during vesicle biogenesis at certain cargo subdomains, which could be predominantly utilized by secreted MMPs, such as MMP7 and MMP2. Also involved in autophagy by regulating the starvation-dependent trafficking of ATG9A vesicles which deliver the phosphatidylinositol 4-kinase beta (PI4KB) to the autophagosome initiation site. Involved in phagophore growth during mitophagy by regulating ATG9A trafficking to mitochondria. In addition, plays a role in NF-kappa-B inhibition by interacting with IKBKB and IKBKG. In Mus musculus (Mouse), this protein is Arfaptin-2.